Reading from the N-terminus, the 362-residue chain is Chalcone synthase A (362 aa).

Cys-168 is a catalytic residue.

Belongs to the thiolase-like superfamily. Chalcone/stilbene synthases family.

The catalysed reaction is (E)-4-coumaroyl-CoA + 3 malonyl-CoA + 3 H(+) = 2',4,4',6'-tetrahydroxychalcone + 3 CO2 + 4 CoA. It functions in the pathway secondary metabolite biosynthesis; flavonoid biosynthesis. Functionally, the primary product of this enzyme is 4,2',4',6'-tetrahydroxychalcone (also termed naringenin-chalcone or chalcone) which can under specific conditions spontaneously isomerize into naringenin. This chain is Chalcone synthase A (CHSA), found in Ipomoea triloba (Trilobed morning glory).